Here is a 206-residue protein sequence, read N- to C-terminus: Uridine kinase (206 aa).

9–16 lines the ATP pocket; the sequence is GGSGSGKT.

This sequence belongs to the uridine kinase family. In terms of assembly, monomer.

The protein resides in the cytoplasm. The enzyme catalyses uridine + ATP = UMP + ADP + H(+). The catalysed reaction is cytidine + ATP = CMP + ADP + H(+). It participates in pyrimidine metabolism; CTP biosynthesis via salvage pathway; CTP from cytidine: step 1/3. The protein operates within pyrimidine metabolism; UMP biosynthesis via salvage pathway; UMP from uridine: step 1/1. This is Uridine kinase (udk) from Borreliella burgdorferi (strain ATCC 35210 / DSM 4680 / CIP 102532 / B31) (Borrelia burgdorferi).